We begin with the raw amino-acid sequence, 42 residues long: Photosystem II reaction center protein J (42 aa).

Residues 10 to 30 (IPLWLVATVAGLAVIALLGVF) traverse the membrane as a helical segment.

This sequence belongs to the PsbJ family. In terms of assembly, PSII is composed of 1 copy each of membrane proteins PsbA, PsbB, PsbC, PsbD, PsbE, PsbF, PsbH, PsbI, PsbJ, PsbK, PsbL, PsbM, PsbT, PsbX, PsbY, PsbZ, Psb30/Ycf12, at least 3 peripheral proteins of the oxygen-evolving complex and a large number of cofactors. It forms dimeric complexes.

Its subcellular location is the plastid. The protein localises to the chloroplast thylakoid membrane. Its function is as follows. One of the components of the core complex of photosystem II (PSII). PSII is a light-driven water:plastoquinone oxidoreductase that uses light energy to abstract electrons from H(2)O, generating O(2) and a proton gradient subsequently used for ATP formation. It consists of a core antenna complex that captures photons, and an electron transfer chain that converts photonic excitation into a charge separation. The protein is Photosystem II reaction center protein J of Chlorokybus atmophyticus (Soil alga).